The following is a 576-amino-acid chain: 4-alpha-glucanotransferase DPE1, chloroplastic/amyloplastic (576 aa).

The transit peptide at 1–45 directs the protein to the chloroplast; it reads MSILLRPSSSPSLCSSLKLFRLSSPDSLIDAAVLRNRTKPSQSFR.

It belongs to the disproportionating enzyme family.

The protein localises to the plastid. The protein resides in the chloroplast. It is found in the amyloplast. It catalyses the reaction Transfers a segment of a (1-&gt;4)-alpha-D-glucan to a new position in an acceptor, which may be glucose or a (1-&gt;4)-alpha-D-glucan.. Chloroplastic alpha-glucanotransferase involved in maltotriose metabolism. Probably uses maltotriose as substrate to transfer a maltosyl unit from one molecule to another, resulting in glucose and maltopentaose. The latter can then be further metabolized to maltose and maltotriose by beta-amylase. Required for normal starch degradation in leaves. This chain is 4-alpha-glucanotransferase DPE1, chloroplastic/amyloplastic (DPE1), found in Arabidopsis thaliana (Mouse-ear cress).